Consider the following 257-residue polypeptide: 3-methyl-2-oxobutanoate hydroxymethyltransferase (257 aa).

The Mg(2+) site is built by Asp-42 and Asp-86. 3-methyl-2-oxobutanoate contacts are provided by residues 42 to 43 (DS), Asp-86, and Lys-116. Glu-118 contributes to the Mg(2+) binding site. Glu-185 (proton acceptor) is an active-site residue.

Belongs to the PanB family. In terms of assembly, homodecamer; pentamer of dimers. The cofactor is Mg(2+).

It localises to the cytoplasm. It carries out the reaction 3-methyl-2-oxobutanoate + (6R)-5,10-methylene-5,6,7,8-tetrahydrofolate + H2O = 2-dehydropantoate + (6S)-5,6,7,8-tetrahydrofolate. The protein operates within cofactor biosynthesis; (R)-pantothenate biosynthesis; (R)-pantoate from 3-methyl-2-oxobutanoate: step 1/2. Its function is as follows. Catalyzes the reversible reaction in which hydroxymethyl group from 5,10-methylenetetrahydrofolate is transferred onto alpha-ketoisovalerate to form ketopantoate. This Prochlorococcus marinus subsp. pastoris (strain CCMP1986 / NIES-2087 / MED4) protein is 3-methyl-2-oxobutanoate hydroxymethyltransferase.